The primary structure comprises 413 residues: MVEAERAENSWIASETSPSSSPVVIESSDFSITDGMRDVSGFGIASRPQLDKGLSENNIGFTERVFSAAGAAVLSAVTLNPLDVVKTRLQAQAAGMSYSHPLSNSIGRMAFFGPNMMFADLRCSPSCARAGVEGTVSICPPDCFQYKGTFDVFTKIIRQEGLGRLWRGTNAGLALAVPMVGIYLPFYDMFRNRLEELSREKAPAMTFCVPTVAGSLARSLACTVCYPIDLARTRMQAFKEAKAGVKPPGVFKTLVGVFSEVRTANNLESSLHNYRGLWRGLGAQLARDVPFSAICWSTLEPIKKRLLGVAGNDTNLVGVFGATFSAGFIAGSIAAAATCPLDVARTRRQIEKDPGRALMMTTRQTLIEVWRDGGMRGLFMGMGPRVARAGPSVGIVVSFYEVVKYVLHRHASS.

3 Solcar repeats span residues isoleucine 59 to arginine 193, methionine 205 to arginine 305, and glycine 318 to valine 406. The next 6 helical transmembrane spans lie at valine 65–valine 85, asparagine 170–phenylalanine 190, alanine 204–tyrosine 226, glutamine 284–lysine 304, leucine 316–alanine 336, and leucine 378–phenylalanine 399.

It belongs to the mitochondrial carrier (TC 2.A.29) family. As to expression, ubiquitous.

It is found in the mitochondrion inner membrane. Its function is as follows. Involved in the mitochondrial activation of MSD1 by specifically facilitating insertion of the essential manganese cofactor. Has the ability to activate iron regulon in an iron-dependent manner. In Arabidopsis thaliana (Mouse-ear cress), this protein is Mitochondrial carrier protein MTM1 (MTM1).